A 412-amino-acid polypeptide reads, in one-letter code: MIARCKGCSDLLPEDMLRFRYIESIFHDSCITWGYEEVRTPMLEYLSLFTSSGTLTPQMLKRVYSFLDWDGWSGERVVLRPDGTIPAARLYIDNLQEMEVARLCYTSNIFRFDETGKKSRENWQLGAEIIGVTGSEANAELITLALETLSRLGFEDVELRLSHSQLIKAVLAQLEPNADEQHKIFDQLLDGDVALMSRLEAEKPELFRTLKLLMENKGTSAAFLKNVMAMAGAAGGDLEEPLNDFIAGVDVLDKLGVSYQIDLASGKGFEYYTGVIFHLFVNGEHVGGGGRYDKLIPLLGGPDKPAAGFALYLNRLIPMIDAEDMYDMVEEKILIKYEGDNLKNAYEMANLIRECGISAELFYPGVDTAAYGWAVTVKAADSYEVTDLIEDKTTEFKNQAEVICLLSGEEDA.

It belongs to the class-II aminoacyl-tRNA synthetase family. HisZ subfamily. Heteromultimer composed of HisG and HisZ subunits.

The protein localises to the cytoplasm. Its pathway is amino-acid biosynthesis; L-histidine biosynthesis; L-histidine from 5-phospho-alpha-D-ribose 1-diphosphate: step 1/9. In terms of biological role, required for the first step of histidine biosynthesis. May allow the feedback regulation of ATP phosphoribosyltransferase activity by histidine. In Dehalococcoides mccartyi (strain ATCC BAA-2266 / KCTC 15142 / 195) (Dehalococcoides ethenogenes (strain 195)), this protein is ATP phosphoribosyltransferase regulatory subunit.